The chain runs to 382 residues: MNNNSRNNENRSTINRNKRQLQQAKEKNENIHIPRYIRNQPWYYKDTPKEQEGKKPGNDDTSTAEGGEKSDYLVHHRQKAKGGALDIDNNSEPKIGMGIKDEFKLIRPQKMSVRDSHSLSFCRNCGEAGHKEKDCMEKPRKMQKLVPDLNSQKNNGTVLVRATDDDWDSRKDRWYGYSGKEYNELISKWERDKRNKIKGKDKSQTDETLWDTDEEIELMKLELYKDSVGSLKKDDADNSQLYRTSTRLREDKAAYLNDINSTESNYDPKSRLYKTETLGAVDEKSKMFRRHLTGEGLKLNELNQFARSHAKEMGIRDEIEDKEKVQHVLVANPTKYEYLKKKREQEETKQPKIVSIGDLEARKVDGTKQSEEQRNHLKDLYG.

Residues 1–15 (MNNNSRNNENRSTIN) are compositionally biased toward low complexity. A disordered region spans residues 1 to 72 (MNNNSRNNEN…TAEGGEKSDY (72 aa)). The span at 46–58 (DTPKEQEGKKPGN) shows a compositional bias: basic and acidic residues. Residue Ser-120 is modified to Phosphoserine. Residues 120-137 (SFCRNCGEAGHKEKDCME) form a CCHC-type zinc finger. The interaction with PRP8 stretch occupies residues 200–224 (KDKSQTDETLWDTDEEIELMKLELY). The residue at position 212 (Thr-212) is a Phosphothreonine. A disordered region spans residues 362–382 (RKVDGTKQSEEQRNHLKDLYG).

Belongs to the SLU7 family. Belongs to the CWC complex (or CEF1-associated complex), a spliceosome sub-complex reminiscent of a late-stage spliceosome composed of the U2, U5 and U6 snRNAs and at least BUD13, BUD31, BRR2, CDC40, CEF1, CLF1, CUS1, CWC2, CWC15, CWC21, CWC22, CWC23, CWC24, CWC25, CWC27, ECM2, HSH155, IST3, ISY1, LEA1, MSL1, NTC20, PRP8, PRP9, PRP11, PRP19, PRP21, PRP22, PRP45, PRP46, SLU7, SMB1, SMD1, SMD2, SMD3, SMX2, SMX3, SNT309, SNU114, SPP2, SYF1, SYF2, RSE1 and YJU2. Interacts with BRR2, ECM2, PRP18 and PRP22. In terms of processing, N-glycosylated.

It is found in the nucleus. Essential protein involved in the second catalytic step of pre-mRNA splicing. Involved in the selection of 3'-type splice sites; this selection could be done via a 3'-splice site-binding factor, PRP16. This is Pre-mRNA-splicing factor SLU7 (SLU7) from Saccharomyces cerevisiae (strain ATCC 204508 / S288c) (Baker's yeast).